The following is a 23-amino-acid chain: Conotoxin as25a (23 aa).

Position 4 is a 4-hydroxyproline; partial (proline 4). Residue proline 23 is modified to 4-hydroxyproline; partial; alternate. A Proline amide; alternate modification is found at proline 23.

The name as25b given in PubMed:23474143 corresponds to the hydroxylated peptide. The amidation of the C-terminus of this hydroxylated peptide is not directly confirmed. In terms of processing, contains 3 disulfide bonds. Expressed by the venom duct.

It is found in the secreted. Its function is as follows. Upon intracranial injection in mice, as25a (the toxin without the two 4-hydroxyprolines) provokes paralysis of the hind limbs and death with a dose of 240 pmol. The sequence is that of Conotoxin as25a from Conus cancellatus (Cancellate cone).